The sequence spans 343 residues: Probable transcription factor MYB58 (343 aa).

Residues 1 to 30 (MARAPGGVRRRSGRRGAGGGGAGGGGEALR) are disordered. Positions 15-27 (RGAGGGGAGGGGE) are enriched in gly residues. 2 HTH myb-type domains span residues 26 to 78 (GEAL…VNKL) and 79 to 134 (RPNL…KRLA). DNA-binding regions (H-T-H motif) lie at residues 54-77 (WSSIRSKGLLPRTGKSCRLRWVNK) and 107-130 (WARIATYLQGRTDNDVKNFWSTRQ). Disordered stretches follow at residues 137–169 (LRGPLPAARPNKHNSGKGKAPSSSSLDSQTATF), 219–238 (PPADGEASSSNAAQSAPPPL), and 307–343 (DDLPPNMFDDAVDQPPPPPPPPPPPSPSPSPSRDDVL). Positions 157 to 169 (PSSSSLDSQTATF) are enriched in polar residues. Positions 320-336 (QPPPPPPPPPPPSPSPS) are enriched in pro residues.

It is found in the nucleus. Functionally, probable transcription factor. In Oryza sativa subsp. japonica (Rice), this protein is Probable transcription factor MYB58.